Reading from the N-terminus, the 59-residue chain is UPF0181 protein CKO_01169 (59 aa).

Belongs to the UPF0181 family.

This Citrobacter koseri (strain ATCC BAA-895 / CDC 4225-83 / SGSC4696) protein is UPF0181 protein CKO_01169.